The following is a 471-amino-acid chain: 3-isopropylmalate dehydratase large subunit (471 aa).

Residues Cys-347, Cys-407, and Cys-410 each coordinate [4Fe-4S] cluster.

It belongs to the aconitase/IPM isomerase family. LeuC type 1 subfamily. In terms of assembly, heterodimer of LeuC and LeuD. The cofactor is [4Fe-4S] cluster.

The catalysed reaction is (2R,3S)-3-isopropylmalate = (2S)-2-isopropylmalate. Its pathway is amino-acid biosynthesis; L-leucine biosynthesis; L-leucine from 3-methyl-2-oxobutanoate: step 2/4. Catalyzes the isomerization between 2-isopropylmalate and 3-isopropylmalate, via the formation of 2-isopropylmaleate. The chain is 3-isopropylmalate dehydratase large subunit from Geobacillus sp. (strain WCH70).